The primary structure comprises 341 residues: tRNA N6-adenosine threonylcarbamoyltransferase (341 aa).

Fe cation contacts are provided by histidine 111 and histidine 115. Substrate is bound by residues 133–137 (AVSGG), aspartate 166, glycine 179, aspartate 183, and asparagine 273. Aspartate 301 serves as a coordination point for Fe cation.

The protein belongs to the KAE1 / TsaD family. Requires Fe(2+) as cofactor.

It is found in the cytoplasm. It catalyses the reaction L-threonylcarbamoyladenylate + adenosine(37) in tRNA = N(6)-L-threonylcarbamoyladenosine(37) in tRNA + AMP + H(+). Its function is as follows. Required for the formation of a threonylcarbamoyl group on adenosine at position 37 (t(6)A37) in tRNAs that read codons beginning with adenine. Is involved in the transfer of the threonylcarbamoyl moiety of threonylcarbamoyl-AMP (TC-AMP) to the N6 group of A37, together with TsaE and TsaB. TsaD likely plays a direct catalytic role in this reaction. This Geotalea daltonii (strain DSM 22248 / JCM 15807 / FRC-32) (Geobacter daltonii) protein is tRNA N6-adenosine threonylcarbamoyltransferase.